The sequence spans 432 residues: Alcohol acyltransferase 9 (432 aa).

Active-site proton acceptor residues include H156 and D379.

This sequence belongs to the plant acyltransferase family. As to expression, expressed in fruit.

The catalysed reaction is 2-(methylsulfanyl)acetyl-CoA + butan-1-ol = butyl 2-(methylsulfanyl)acetate + CoA. The enzyme catalyses ethanol + acetyl-CoA = ethyl acetate + CoA. It catalyses the reaction butan-1-ol + acetyl-CoA = butyl acetate + CoA. It carries out the reaction butan-1-ol + propanoyl-CoA = butyl propanoate + CoA. Involved in the biosynthesis of volatile esters which confer kiwifruit flavor. Alcohol acyl transferase that can use a wide range of alcohols as substrate to produce esters. Exhibits acetyl-CoA:alcohol O-acyltransferase activity. The polypeptide is Alcohol acyltransferase 9 (Actinidia deliciosa (Kiwi)).